Here is a 125-residue protein sequence, read N- to C-terminus: Photoactive yellow protein (125 aa).

Residues 23 to 86 (LNQLAFGAIQ…GRFKEGVANG (64 aa)) form the PAS domain. Cysteine 69 is subject to S-(4-hydroxycinnamyl)cysteine.

The protein belongs to the photoactive yellow protein family. The 4-hydroxycinnamic acid (p-coumaric acid) chromophore is covalently bound via a thioester linkage.

Functionally, photoactive blue light protein. Probably functions as a photoreceptor for a negative phototaxis response. This Halochromatium salexigens (Chromatium salexigens) protein is Photoactive yellow protein (pyp).